Reading from the N-terminus, the 372-residue chain is Alanine racemase (372 aa).

Lys35 acts as the Proton acceptor; specific for D-alanine in catalysis. Lys35 is modified (N6-(pyridoxal phosphate)lysine). Substrate is bound at residue Arg143. The active-site Proton acceptor; specific for L-alanine is Tyr268. Met316 serves as a coordination point for substrate.

The protein belongs to the alanine racemase family. Pyridoxal 5'-phosphate serves as cofactor.

The enzyme catalyses L-alanine = D-alanine. The protein operates within amino-acid biosynthesis; D-alanine biosynthesis; D-alanine from L-alanine: step 1/1. In terms of biological role, catalyzes the interconversion of L-alanine and D-alanine. May also act on other amino acids. This is Alanine racemase (alr) from Shewanella frigidimarina (strain NCIMB 400).